The sequence spans 321 residues: Methionine import ATP-binding protein MetN (321 aa).

One can recognise an ABC transporter domain in the interval 2-241 (INAVDLHKVY…PGSLLARSLF (240 aa)). Residue 38 to 45 (GPSGAGKS) coordinates ATP.

Belongs to the ABC transporter superfamily. Methionine importer (TC 3.A.1.24) family. In terms of assembly, the complex is composed of two ATP-binding proteins (MetN), two transmembrane proteins (MetI) and a solute-binding protein (MetQ).

The protein resides in the cell membrane. It catalyses the reaction L-methionine(out) + ATP + H2O = L-methionine(in) + ADP + phosphate + H(+). The enzyme catalyses D-methionine(out) + ATP + H2O = D-methionine(in) + ADP + phosphate + H(+). Part of the ABC transporter complex MetNIQ involved in methionine import. Responsible for energy coupling to the transport system. The sequence is that of Methionine import ATP-binding protein MetN from Thermobifida fusca (strain YX).